Consider the following 369-residue polypeptide: MFGNGQTGQRLPAMASPPHDSYYSQSLASSRSRNNSDAMDIYAITDRDPPAREPSGYSQWYRNGSPSVNSIHSKSSEKQPFYEENGRMYHAYRKGVYMLPCDEQEQDRLDIFHKLFTVARVSDGLMYAPHPRNGRFLDLGCGTGIWAIDVANKYPDAFVVGVDLAPIQPSNHPKNCEFYAPFDFESPWAMGEDSWDLIHLQMGCGSVMGWPNLYRRIFAHLRPGAWFEQVEIDFEPRCDDRPLEGLAIRQWYQYLKQATQDAMRPINHNSRDTIRDLQEAGFTDIDHQMVGLPLNPWHQDEHERKVARWYNLAVSESIESLSMAPFSRIFNWDLDRIRRISSEVKSEAFNKEIHAYNILHIYQARKPAN.

The segment at 1–37 is disordered; that stretch reads MFGNGQTGQRLPAMASPPHDSYYSQSLASSRSRNNSD. The span at 20–37 shows a compositional bias: low complexity; that stretch reads DSYYSQSLASSRSRNNSD.

Belongs to the methyltransferase superfamily. LaeA methyltransferase family. Component of the heterotrimeric velvet complex composed of laeA, veA and velB; VeA acting as a bridging protein between laeA and velB. Interacts directly with veA.

It localises to the nucleus. The catalysed reaction is L-methionyl-[protein] + S-adenosyl-L-methionine = S-methyl-L-methionyl-[protein] + S-adenosyl-L-homocysteine. In terms of biological role, methyltransferase that performs automethylation. No other methyl-accepting substrate has been identified yet. Component of the velvet transcription factor complex that acts as a global regulator for secondary metabolite gene expression. Required for aflR expression and subsequent aflatoxin production. Negatively regulates veA expression. Controls conidiophore and conidial development. Required for hydrophobin production which plays a role in cell surface hydrophobicity and host defense escape. This chain is Secondary metabolism regulator laeA, found in Aspergillus flavus (strain ATCC 200026 / FGSC A1120 / IAM 13836 / NRRL 3357 / JCM 12722 / SRRC 167).